A 340-amino-acid chain; its full sequence is Phosphate acyltransferase (340 aa).

Belongs to the PlsX family. As to quaternary structure, homodimer. Probably interacts with PlsY.

It is found in the cytoplasm. It carries out the reaction a fatty acyl-[ACP] + phosphate = an acyl phosphate + holo-[ACP]. It participates in lipid metabolism; phospholipid metabolism. Functionally, catalyzes the reversible formation of acyl-phosphate (acyl-PO(4)) from acyl-[acyl-carrier-protein] (acyl-ACP). This enzyme utilizes acyl-ACP as fatty acyl donor, but not acyl-CoA. The polypeptide is Phosphate acyltransferase (Pseudomonas syringae pv. syringae (strain B728a)).